A 352-amino-acid polypeptide reads, in one-letter code: Leukotriene B4 receptor 1 (352 aa).

At 1-19 the chain is on the extracellular side; sequence MNTTSSAAPPSLGVEFISL. A glycan (N-linked (GlcNAc...) asparagine) is linked at Asn-2. A helical membrane pass occupies residues 20–42; that stretch reads LAIILLSVALAVGLPGNSFVVWS. Topologically, residues 43–54 are cytoplasmic; sequence ILKRMQKRSVTA. A helical membrane pass occupies residues 55–75; the sequence is LMVLNLALADLAVLLTAPFFL. At 76–91 the chain is on the extracellular side; that stretch reads HFLAQGTWSFGLAGCR. Residues 92–113 form a helical membrane-spanning segment; that stretch reads LCHYVCGVSMYASVLLITAMSL. Residues 114–138 lie on the Cytoplasmic side of the membrane; that stretch reads DRSLAVARPFVSQKLRTKAMARRVL. A helical transmembrane segment spans residues 139–159; that stretch reads AGIWVLSFLLATPVLAYRTVV. Residues 160 to 178 lie on the Extracellular side of the membrane; the sequence is PWKTNMSLCFPRYPSEGHR. An N-linked (GlcNAc...) asparagine glycan is attached at Asn-164. Residues 179–199 traverse the membrane as a helical segment; the sequence is AFHLIFEAVTGFLLPFLAVVA. Residues 200–221 are Cytoplasmic-facing; the sequence is SYSDIGRRLQARRFRRSRRTGR. The helical transmembrane segment at 222–242 threads the bilayer; sequence LVVLIILTFAAFWLPYHVVNL. Topologically, residues 243 to 268 are extracellular; that stretch reads AEAGRALAGQAAGLGLVGKRLSLARN. The chain crosses the membrane as a helical span at residues 269–289; it reads VLIALAFLSSSVNPVLYACAG. At 290 to 352 the chain is on the cytoplasmic side; that stretch reads GGLLRSAGVG…SSPLKLNELN (63 aa). Polar residues-rich tracts occupy residues 310-326 and 338-352; these read SEAS…QTAR and ESLT…NELN. The tract at residues 310–352 is disordered; sequence SEASSTRRGGSLGQTARSGPAALEPGPSESLTASSPLKLNELN.

It belongs to the G-protein coupled receptor 1 family. Phosphorylated by GRK6 upon leukotriene B4 binding; which promotes desensitization. In terms of tissue distribution, expressed at highest levels in heart, skeletal muscle and at lower levels in brain and liver. High level of expression in lymphoid tissues.

It localises to the cell membrane. Its function is as follows. Receptor for extracellular ATP &gt; UTP and ADP. The activity of this receptor is mediated by G proteins which activate a phosphatidylinositol-calcium second messenger system. May be the cardiac P2Y receptor involved in the regulation of cardiac muscle contraction through modulation of L-type calcium currents. Is a receptor for leukotriene B4, a potent chemoattractant involved in inflammation and immune response. The polypeptide is Leukotriene B4 receptor 1 (LTB4R) (Homo sapiens (Human)).